The sequence spans 309 residues: Cytochrome c1, heme protein, mitochondrial (309 aa).

A mitochondrion-targeting transit peptide spans 1-61; sequence MFSNLSKRWA…LYADSLTAEA (61 aa). The Mitochondrial intermembrane portion of the chain corresponds to 62–262; the sequence is MTAAEHGLHA…TFLNWCAEPE (201 aa). The Cytochrome c domain occupies 88–241; it reads ASIRRGYQVY…DMVEYEDGTP (154 aa). Residues cysteine 101, cysteine 104, and histidine 105 each coordinate heme c. Residues 131 to 140 are compositionally biased toward acidic residues; sequence EFEYDDEPDE. A disordered region spans residues 131 to 168; it reads EFEYDDEPDEQGNPKKRPGKLSDYIPGPYPNEQAARAA. Methionine 225 contacts heme c. The helical transmembrane segment at 263–296 threads the bilayer; it reads HDERKRLGLKTVIILSSLYLLSIWVKKFKWAGIK. The Mitochondrial matrix portion of the chain corresponds to 297–309; sequence TRKFVFNPPKPRK.

The protein belongs to the cytochrome c family. In terms of assembly, component of the ubiquinol-cytochrome c oxidoreductase (cytochrome b-c1 complex, complex III, CIII), a multisubunit enzyme composed of 10 subunits. The complex is composed of 3 respiratory subunits cytochrome b (COB), cytochrome c1 (CYT1) and Rieske protein (RIP1), 2 core protein subunits COR1 and QCR2, and 5 low-molecular weight protein subunits QCR6, QCR7, QCR8, QCR9 and QCR10. The complex exists as an obligatory dimer and forms supercomplexes (SCs) in the inner mitochondrial membrane with a monomer or a dimer of cytochrome c oxidase (complex IV, CIV), resulting in 2 different assemblies (supercomplexes III(2)IV and III(2)IV(2)). CYT1 interacts with COX5A at the CIII-CIV interface. Heme c is required as a cofactor.

Its subcellular location is the mitochondrion inner membrane. The catalysed reaction is a quinol + 2 Fe(III)-[cytochrome c](out) = a quinone + 2 Fe(II)-[cytochrome c](out) + 2 H(+)(out). Its function is as follows. Component of the ubiquinol-cytochrome c oxidoreductase, a multisubunit transmembrane complex that is part of the mitochondrial electron transport chain which drives oxidative phosphorylation. The respiratory chain contains 3 multisubunit complexes succinate dehydrogenase (complex II, CII), ubiquinol-cytochrome c oxidoreductase (cytochrome b-c1 complex, complex III, CIII) and cytochrome c oxidase (complex IV, CIV), that cooperate to transfer electrons derived from NADH and succinate to molecular oxygen, creating an electrochemical gradient over the inner membrane that drives transmembrane transport and the ATP synthase. The cytochrome b-c1 complex catalyzes electron transfer from ubiquinol to cytochrome c, linking this redox reaction to translocation of protons across the mitochondrial inner membrane, with protons being carried across the membrane as hydrogens on the quinol. In the process called Q cycle, 2 protons are consumed from the matrix, 4 protons are released into the intermembrane space and 2 electrons are passed to cytochrome c. Cytochrome c1 is a catalytic core subunit containing a c-type heme. It transfers electrons from the [2Fe-2S] iron-sulfur cluster of the Rieske protein to cytochrome c. The polypeptide is Cytochrome c1, heme protein, mitochondrial (CYT1) (Saccharomyces cerevisiae (strain ATCC 204508 / S288c) (Baker's yeast)).